The primary structure comprises 76 residues: Tautomerase PptA (76 aa).

Catalysis depends on P2, which acts as the Proton acceptor; via imino nitrogen.

The protein belongs to the 4-oxalocrotonate tautomerase family. PptA subfamily. Homodimer.

Its subcellular location is the cytoplasm. This is Tautomerase PptA from Pectobacterium carotovorum subsp. carotovorum (strain PC1).